The following is a 690-amino-acid chain: Elongation factor G (690 aa).

A tr-type G domain is found at 8–283; it reads SKCRNIGIMA…AVVDFLPAPN (276 aa). GTP contacts are provided by residues 17–24, 81–85, and 135–138; these read AHIDAGKT, DTPGH, and NKMD.

This sequence belongs to the TRAFAC class translation factor GTPase superfamily. Classic translation factor GTPase family. EF-G/EF-2 subfamily.

Its subcellular location is the cytoplasm. Functionally, catalyzes the GTP-dependent ribosomal translocation step during translation elongation. During this step, the ribosome changes from the pre-translocational (PRE) to the post-translocational (POST) state as the newly formed A-site-bound peptidyl-tRNA and P-site-bound deacylated tRNA move to the P and E sites, respectively. Catalyzes the coordinated movement of the two tRNA molecules, the mRNA and conformational changes in the ribosome. The chain is Elongation factor G from Ehrlichia chaffeensis (strain ATCC CRL-10679 / Arkansas).